The sequence spans 46 residues: Light-harvesting protein B-800/850 beta 2 chain (46 aa).

Residues 2-25 (AERSLSGLTEEEAVAVHAQFQTTF) are Cytoplasmic-facing. The a bacteriochlorophyll site is built by His18 and His36. The chain crosses the membrane as a helical span at residues 26 to 46 (SAFIVLAAVAHVLVWVWKPWF).

This sequence belongs to the antenna complex beta subunit family. The core complex is formed by different alpha and beta chains, binding bacteriochlorophyll molecules, and arranged most probably in tetrameric structures disposed around the reaction center.

The protein resides in the cell inner membrane. Functionally, antenna complexes are light-harvesting systems, which transfer the excitation energy to the reaction centers. The chain is Light-harvesting protein B-800/850 beta 2 chain (B2) from Magnetospirillum molischianum (Rhodospirillum molischianum).